The primary structure comprises 384 residues: Adaptive-response sensory kinase SasA (384 aa).

The Histidine kinase domain maps to 162–384 (MLAHDLRSPL…SFHFTLPVYR (223 aa)). Phosphohistidine; by autocatalysis is present on His-165.

Homooligomerizes. Interacts with KaiC. Participates in the KaiABC clock complex, whose core is composed of a KaiC homohexamer, 6 KaiB and up to 6 KaiA dimers. SasA and KaiB(fs) compete to bind to KaiC.

The catalysed reaction is ATP + protein L-histidine = ADP + protein N-phospho-L-histidine.. Its function is as follows. Member of the two-component regulatory system SasA/RpaA involved in genome-wide circadian gene expression. One of several clock output pathways. Participates in the Kai clock protein complex, the main circadian regulator in cyanobacteria, via its interaction with KaiC. KaiC enhances the autophosphorylation activity of SasA, which then transfers its phosphate group to RpaA to activate it. In addition to its output function, recruits fold-shifted KaiB (KaiB(fs)) to KaiC to cooperatively form the KaiB(6):KaiC(6) complex (independent of SasA kinase activity). Required for robustness of the circadian rhythm of gene expression and is involved in clock output, also required for adaptation to light/dark cycles. The chain is Adaptive-response sensory kinase SasA from Microcystis aeruginosa (strain NIES-843 / IAM M-2473).